A 299-amino-acid polypeptide reads, in one-letter code: 5,10-dihydrophenazine-1-carboxylate 9-dimethylallyltransferase (299 aa).

This sequence belongs to the aromatic prenyltransferase family.

It carries out the reaction 5,10-dihydrophenazine 1-carboxylate + dimethylallyl diphosphate = 5,10-dihydro-9-dimethylallylphenazine 1-carboxylate + diphosphate. It functions in the pathway antibiotic biosynthesis; phenazine biosynthesis. Does not require magnesium or any other divalent metal ions for activity. In terms of biological role, involved in the biosynthesis of prenylated phenazines. Catalyzes the transfer of a dimethylallyl moiety to C-9 of 5,10-dihydrophenazine 1-carboxylate (dihydro-PCA). Specific for both dimethylallyl diphosphate and dihydro-PCA. This Streptomyces anulatus (Streptomyces chrysomallus) protein is 5,10-dihydrophenazine-1-carboxylate 9-dimethylallyltransferase.